Here is a 348-residue protein sequence, read N- to C-terminus: Protein RecA (348 aa).

68-75 serves as a coordination point for ATP; that stretch reads GPESSGKT.

This sequence belongs to the RecA family.

The protein resides in the cytoplasm. In terms of biological role, can catalyze the hydrolysis of ATP in the presence of single-stranded DNA, the ATP-dependent uptake of single-stranded DNA by duplex DNA, and the ATP-dependent hybridization of homologous single-stranded DNAs. It interacts with LexA causing its activation and leading to its autocatalytic cleavage. This Rhodococcus opacus (strain B4) protein is Protein RecA.